Consider the following 298-residue polypeptide: ATP phosphoribosyltransferase (298 aa).

The protein belongs to the ATP phosphoribosyltransferase family. Long subfamily. Mg(2+) serves as cofactor.

It localises to the cytoplasm. The enzyme catalyses 1-(5-phospho-beta-D-ribosyl)-ATP + diphosphate = 5-phospho-alpha-D-ribose 1-diphosphate + ATP. It participates in amino-acid biosynthesis; L-histidine biosynthesis; L-histidine from 5-phospho-alpha-D-ribose 1-diphosphate: step 1/9. With respect to regulation, feedback inhibited by histidine. Catalyzes the condensation of ATP and 5-phosphoribose 1-diphosphate to form N'-(5'-phosphoribosyl)-ATP (PR-ATP). Has a crucial role in the pathway because the rate of histidine biosynthesis seems to be controlled primarily by regulation of HisG enzymatic activity. The sequence is that of ATP phosphoribosyltransferase from Aeromonas salmonicida (strain A449).